The primary structure comprises 99 residues: Small ribosomal subunit protein bS20 (99 aa).

The span at 1-20 shows a compositional bias: basic residues; the sequence is MASAKPKKKNPRLASGRKRV. A disordered region spans residues 1–21; sequence MASAKPKKKNPRLASGRKRVR.

The protein belongs to the bacterial ribosomal protein bS20 family.

Binds directly to 16S ribosomal RNA. The chain is Small ribosomal subunit protein bS20 from Verminephrobacter eiseniae (strain EF01-2).